Consider the following 252-residue polypeptide: Imidazole glycerol phosphate synthase subunit HisF (252 aa).

Residues Asp-11 and Asp-130 contribute to the active site.

This sequence belongs to the HisA/HisF family. In terms of assembly, heterodimer of HisH and HisF.

The protein localises to the cytoplasm. It carries out the reaction 5-[(5-phospho-1-deoxy-D-ribulos-1-ylimino)methylamino]-1-(5-phospho-beta-D-ribosyl)imidazole-4-carboxamide + L-glutamine = D-erythro-1-(imidazol-4-yl)glycerol 3-phosphate + 5-amino-1-(5-phospho-beta-D-ribosyl)imidazole-4-carboxamide + L-glutamate + H(+). Its pathway is amino-acid biosynthesis; L-histidine biosynthesis; L-histidine from 5-phospho-alpha-D-ribose 1-diphosphate: step 5/9. Its function is as follows. IGPS catalyzes the conversion of PRFAR and glutamine to IGP, AICAR and glutamate. The HisF subunit catalyzes the cyclization activity that produces IGP and AICAR from PRFAR using the ammonia provided by the HisH subunit. This chain is Imidazole glycerol phosphate synthase subunit HisF, found in Staphylococcus aureus (strain USA300).